We begin with the raw amino-acid sequence, 124 residues long: Large ribosomal subunit protein bL21 (124 aa).

Belongs to the bacterial ribosomal protein bL21 family. In terms of assembly, part of the 50S ribosomal subunit. Contacts protein L20.

Its function is as follows. This protein binds to 23S rRNA in the presence of protein L20. This chain is Large ribosomal subunit protein bL21, found in Sinorhizobium medicae (strain WSM419) (Ensifer medicae).